The following is a 710-amino-acid chain: multidrug resistance regulator 2 (710 aa).

Residues 11–37 (CDACRSRKIKCNRQTPCASCHKSKRDC) constitute a DNA-binding region (zn(2)-C6 fungal-type). 2 helical membrane passes run 475–495 (DLVIFSVNFLLVYMYYSLYLF) and 525–545 (LFLAYFNLNYIHLVLMITNFL).

It is found in the nucleus. Its subcellular location is the membrane. In terms of biological role, transcription factor that controls the expression of CDR1, the major multidrug efflux pump. Required for yeast cell adherence to silicone substrate and plays a role in virulence. The protein is multidrug resistance regulator 2 of Candida albicans (strain SC5314 / ATCC MYA-2876) (Yeast).